We begin with the raw amino-acid sequence, 99 residues long: U2-theraphotoxin-Lsp1a (99 aa).

Residues 1–22 (MNTIQVIIFAVVLVLTVTVGQA) form the signal peptide. Positions 23–57 (DEDSPEASLLRKLKEAEASLFGQNLEESRNSRQKR) are excised as a propeptide. Cystine bridges form between Cys-58–Cys-73, Cys-65–Cys-78, and Cys-72–Cys-93.

It belongs to the neurotoxin 14 (magi-1) family. 08 (Ltx-4) subfamily. Expressed by the venom gland.

It is found in the secreted. Insecticidal neurotoxin. The chain is U2-theraphotoxin-Lsp1a from Lasiodora sp. (strain IBSP 8539) (Brazilian salmon pink birdeater).